The sequence spans 103 residues: Protein IQ-DOMAIN 20 (103 aa).

Residues 10-22 (VVRRKLLRRSQSR) form a calmodulin-binding region. 2 consecutive IQ domains span residues 36 to 62 (EEIAAVKIQAFFRGHLARRAFKALKSL) and 63 to 87 (VKLQAVARGVLVRRQARIALHCMHA).

It belongs to the IQD family. In terms of assembly, interacts with calmodulin (CaM and CML) at the plasma membrane in a calcium ion Ca(2+)- independent manner, however, Ca(2+) seems to modulate calmodulin binding. Binds to multiple calmodulin (CaM) in the presence of Ca(2+) and CaM-like proteins.

Its subcellular location is the nucleus. The protein localises to the nucleolus. It localises to the cell membrane. Functionally, may be involved in cooperative interactions with calmodulins or calmodulin-like proteins. Recruits calmodulin proteins to microtubules, thus being a potential scaffold in cellular signaling and trafficking. May associate with nucleic acids and regulate gene expression at the transcriptional or post-transcriptional level. This is Protein IQ-DOMAIN 20 from Arabidopsis thaliana (Mouse-ear cress).